Here is a 343-residue protein sequence, read N- to C-terminus: Endoplasmic reticulum-resident calcium binding protein (343 aa).

A signal peptide spans 1-26 (MMKINLYKLLCFICVIFLLHKNVVRS). EF-hand domains lie at 59–94 (GAKERIEKLFHLIDKNNDKEITEEELNTWSSFLKNE), 95–130 (IFLKQVQAEMGQIDSDKDGFISLNELNDAFAQNLDA), 135–170 (KHSEGLLKRFQIVDKDKDGKLSINEVGLLIDPMKDE), 172–207 (LKELEINEILEHHDVNKDGKISLDEFKQTRSDESSG), and 210–245 (KDDEMALDDFNFFDANKDGFIDKEEIIKVYFDPAHE). The Ca(2+) site is built by D72, N74, D76, E78, E83, D108, D110, D112, E119, D148, D150, D152, K154, E159, D185, N187, D189, K191, E196, D223, N225, D227, and E234. The segment covering 313 to 331 (EDDDMDADNTEDDKDEADD) has biased composition (acidic residues). The interval 313 to 343 (EDDDMDADNTEDDKDEADDASQQKSPAIDEL) is disordered.

The protein belongs to the CREC family.

Its subcellular location is the endoplasmic reticulum. Functionally, calcium-binding protein. Required for schizont to ring transition. Required for the breakdown of the parasitophorous vacuole membrane during egress. Required for the proteolytic maturation of apical membrane antigen 1 (AMA-1) during egress. Required for the proteolytic maturation of subtilisin-like protease 1 (SUB1) during egress. Required for the proteolytic maturation of plasmepsin X (PMX) during egress. The protein is Endoplasmic reticulum-resident calcium binding protein of Plasmodium falciparum (isolate 3D7).